The sequence spans 80 residues: Metallothionein-like protein 1 (80 aa).

Belongs to the metallothionein superfamily. Type 15 family.

Its function is as follows. Metallothioneins have a high content of cysteine residues that bind various heavy metals. This is Metallothionein-like protein 1 (METAL1) from Coffea arabica (Arabian coffee).